A 567-amino-acid polypeptide reads, in one-letter code: Urease subunit alpha (567 aa).

The Urease domain occupies 129–567 (GGIDTHIHFI…LPMAQRYFLF (439 aa)). The Ni(2+) site is built by His-134, His-136, and Lys-217. Residue Lys-217 is modified to N6-carboxylysine. Substrate is bound at residue His-219. The Ni(2+) site is built by His-246 and His-272. Catalysis depends on His-320, which acts as the Proton donor. Ni(2+) is bound at residue Asp-360.

It belongs to the metallo-dependent hydrolases superfamily. Urease alpha subunit family. In terms of assembly, probable heterotrimer of UreA (gamma), UreB (beta) and UreC (alpha) subunits. Three heterotrimers associate to form the active enzyme. The trimeric urease interacts with an accessory complex composed of UreD, UreF and UreG, which is required for the assembly of the nickel containing metallocenter of UreC. The UreE protein may also play a direct role in nickel transfer to the urease apoprotein. Requires Ni cation as cofactor. Carboxylation allows a single lysine to coordinate two nickel ions.

It localises to the cytoplasm. The enzyme catalyses urea + 2 H2O + H(+) = hydrogencarbonate + 2 NH4(+). It participates in nitrogen metabolism; urea degradation; CO(2) and NH(3) from urea (urease route): step 1/1. In Proteus mirabilis (strain HI4320), this protein is Urease subunit alpha.